Here is a 623-residue protein sequence, read N- to C-terminus: 1-deoxy-D-xylulose-5-phosphate synthase (623 aa).

Residues His-80 and 121–123 (GHS) each bind thiamine diphosphate. Asp-152 serves as a coordination point for Mg(2+). Thiamine diphosphate is bound by residues 153-154 (GA), Asn-181, Tyr-289, and Glu-372. Residue Asn-181 participates in Mg(2+) binding.

The protein belongs to the transketolase family. DXPS subfamily. In terms of assembly, homodimer. The cofactor is Mg(2+). Thiamine diphosphate is required as a cofactor.

It catalyses the reaction D-glyceraldehyde 3-phosphate + pyruvate + H(+) = 1-deoxy-D-xylulose 5-phosphate + CO2. The protein operates within metabolic intermediate biosynthesis; 1-deoxy-D-xylulose 5-phosphate biosynthesis; 1-deoxy-D-xylulose 5-phosphate from D-glyceraldehyde 3-phosphate and pyruvate: step 1/1. Catalyzes the acyloin condensation reaction between C atoms 2 and 3 of pyruvate and glyceraldehyde 3-phosphate to yield 1-deoxy-D-xylulose-5-phosphate (DXP). The protein is 1-deoxy-D-xylulose-5-phosphate synthase of Baumannia cicadellinicola subsp. Homalodisca coagulata.